The sequence spans 245 residues: MLDTSPVSIRSQLNPLICQLAEVILSHWQEYLSLSLYKLPDGLGYVEGKLEGERLVIENRCYQAPQFRKMHLELAKVGKGLDILHCVMFPNPDYSLPMFGCDIVANSRAVSAAIADLSPANAELTLSPTYQKALSQLPSLDFRESRDLPEWGDIFSEYCLFIRPTNAEEETQFINRVADFLKIHCQLAVQSQPVSVEQETLNLAGQKYYCTKQQQNDKTRRVLEKAFGQEWADKYITQVLFDLPY.

The protein belongs to the HY2 family.

The catalysed reaction is (2R,3Z)-phycocyanobilin + 4 oxidized [2Fe-2S]-[ferredoxin] = biliverdin IXalpha + 4 reduced [2Fe-2S]-[ferredoxin] + 4 H(+). Catalyzes the four-electron reduction of biliverdin IX-alpha (2-electron reduction at both the A and D rings); the reaction proceeds via an isolatable 2-electron intermediate, 181,182-dihydrobiliverdin. This Rippkaea orientalis (strain PCC 8801 / RF-1) (Cyanothece sp. (strain PCC 8801)) protein is Phycocyanobilin:ferredoxin oxidoreductase.